A 185-amino-acid chain; its full sequence is Photosystem I assembly protein Ycf4 (185 aa).

2 helical membrane passes run 21-43 (NFCW…TSSY) and 63-85 (GLVM…CTIL).

The protein belongs to the Ycf4 family.

The protein resides in the plastid. It localises to the chloroplast thylakoid membrane. Its function is as follows. Seems to be required for the assembly of the photosystem I complex. The protein is Photosystem I assembly protein Ycf4 of Brassica oleracea (Wild cabbage).